The sequence spans 379 residues: L-lactate dehydrogenase (379 aa).

Residues 1 to 379 (MIISSSTDYR…ITSELLVREP (379 aa)) form the FMN hydroxy acid dehydrogenase domain. Tyr-24 is a substrate binding site. FMN-binding residues include Ser-106 and Gln-127. Tyr-129 is a substrate binding site. Thr-155 lines the FMN pocket. Residue Arg-164 participates in substrate binding. Position 251 (Lys-251) interacts with FMN. Residue His-275 is the Proton acceptor of the active site. Arg-278 provides a ligand contact to substrate. Residue 306 to 330 (DSGIRSGLDVVRMIALGADAAMLGR) coordinates FMN.

It belongs to the FMN-dependent alpha-hydroxy acid dehydrogenase family. FMN serves as cofactor.

It is found in the cell membrane. The enzyme catalyses (S)-lactate + A = pyruvate + AH2. Its function is as follows. Catalyzes the conversion of L-lactate to pyruvate. Is coupled to the respiratory chain. The sequence is that of L-lactate dehydrogenase from Alcaligenes faecalis.